A 251-amino-acid chain; its full sequence is ATP synthase subunit a, chloroplastic (251 aa).

Transmembrane regions (helical) follow at residues 3–23 (IVLL…IANV), 38–58 (IHGQ…FLSI), 99–119 (VPYI…GALI), 138–158 (INTT…AGLN), 203–223 (LVVA…LIFL), and 224–244 (GLFT…SYIG).

The protein belongs to the ATPase A chain family. In terms of assembly, F-type ATPases have 2 components, CF(1) - the catalytic core - and CF(0) - the membrane proton channel. CF(1) has five subunits: alpha(3), beta(3), gamma(1), delta(1), epsilon(1). CF(0) has four main subunits: a, b, b' and c.

The protein localises to the plastid. It localises to the chloroplast thylakoid membrane. Its function is as follows. Key component of the proton channel; it plays a direct role in the translocation of protons across the membrane. The protein is ATP synthase subunit a, chloroplastic of Euglena gracilis.